A 206-amino-acid chain; its full sequence is FMN-dependent NADH:quinone oxidoreductase 2 (206 aa).

Residue S10 participates in FMN binding.

The protein belongs to the azoreductase type 1 family. As to quaternary structure, homodimer. FMN is required as a cofactor.

The catalysed reaction is 2 a quinone + NADH + H(+) = 2 a 1,4-benzosemiquinone + NAD(+). It catalyses the reaction N,N-dimethyl-1,4-phenylenediamine + anthranilate + 2 NAD(+) = 2-(4-dimethylaminophenyl)diazenylbenzoate + 2 NADH + 2 H(+). Quinone reductase that provides resistance to thiol-specific stress caused by electrophilic quinones. Its function is as follows. Also exhibits azoreductase activity. Catalyzes the reductive cleavage of the azo bond in aromatic azo compounds to the corresponding amines. The chain is FMN-dependent NADH:quinone oxidoreductase 2 from Rhizobium etli (strain ATCC 51251 / DSM 11541 / JCM 21823 / NBRC 15573 / CFN 42).